Consider the following 262-residue polypeptide: Oxidoreductase AgnL4 (262 aa).

This sequence belongs to the avfA family.

It participates in secondary metabolite biosynthesis. Functionally, oxidoreductase; part of the gene cluster that mediates the biosynthesis of agnestins, dihydroxy-xanthone metabolites. The pathway begins with the assembly and cyclization of atrochrysone thioester by the non-reducing polyketide synthase Agnpks1. The atrochrysone carboxyl ACP thioesterase AgnL7 then breaks the thioester bond and releases the atrochrysone carboxylic acid as the first enzyme-free intermediate. The decarboxylase AgnL1 then catalyzes the concerted decarboxylation-elimination required to convert atochrysone carboxylic acid into emodin anthrone, which is further oxidized to emodin by the anthrone oxygenase AgnL2. Emodin then undergoes reduction catalyzed by the oxidoreductase AgnL4 to yield the dihydroquinone tautomer which is the substrate for reduction by the short chain dehydrogenase AgnL6 reduction to produce hydroxyketone, followed by AgnL8 dehydration and likely spontaneous autoxidation to chrysophanol. Baeyer-Villiger oxidation by the oxidase AgnL3 leads to monodictyphenone via cleavage of the C-10/C-10a bond of chrysophanol. Alternative cleavage at the C-4a/C-10 bond of chrysophanol also leads to the formation some cephalone F. Further conversion to agnestins A and B, requires reduction to dihydro-monodictyphenone, oxidation to agnestin C probably via an epoxide, and rearrangement to either agnestin A or agnestin B directly, although agnestin A or agnestin B can also interconvert. Within the cluster, AgnR1 is the only unassigned oxidoreductase present which could be involved in this conversion. However, AgnR1 seems not to be involved in this step, and thus genes involved in the proposed oxidation/reduction may be located elsewhere on the genome. Further agnestin A derivatives are probably formed by spontaneous decarboxylations, dehydrations and methanolysis reactions. This is Oxidoreductase AgnL4 from Paecilomyces divaricatus (Penicillium divaricatum).